The chain runs to 424 residues: Methylenetetrahydrofolate--tRNA-(uracil-5-)-methyltransferase TrmFO 1 (424 aa).

8-13 (GAGLSG) contacts FAD.

The protein belongs to the MnmG family. TrmFO subfamily. FAD serves as cofactor.

It localises to the cytoplasm. It carries out the reaction uridine(54) in tRNA + (6R)-5,10-methylene-5,6,7,8-tetrahydrofolate + NADH + H(+) = 5-methyluridine(54) in tRNA + (6S)-5,6,7,8-tetrahydrofolate + NAD(+). The catalysed reaction is uridine(54) in tRNA + (6R)-5,10-methylene-5,6,7,8-tetrahydrofolate + NADPH + H(+) = 5-methyluridine(54) in tRNA + (6S)-5,6,7,8-tetrahydrofolate + NADP(+). Its function is as follows. Catalyzes the folate-dependent formation of 5-methyl-uridine at position 54 (M-5-U54) in all tRNAs. The chain is Methylenetetrahydrofolate--tRNA-(uracil-5-)-methyltransferase TrmFO 1 from Mycoplasma mycoides subsp. mycoides SC (strain CCUG 32753 / NCTC 10114 / PG1).